A 792-amino-acid chain; its full sequence is Probable phosphoketolase (792 aa).

It belongs to the XFP family. The cofactor is thiamine diphosphate.

This is Probable phosphoketolase from Brucella melitensis biotype 1 (strain ATCC 23456 / CCUG 17765 / NCTC 10094 / 16M).